We begin with the raw amino-acid sequence, 226 residues long: Lipoprotein-releasing system ATP-binding protein LolD (226 aa).

One can recognise an ABC transporter domain in the interval 5–225 (LELVEIERHF…TLKEKKIVEL (221 aa)). An ATP-binding site is contributed by 41 to 48 (APSGAGKS).

Belongs to the ABC transporter superfamily. Lipoprotein translocase (TC 3.A.1.125) family. In terms of assembly, the complex is composed of two ATP-binding proteins (LolD) and two transmembrane proteins (LolC and LolE).

Its subcellular location is the cell inner membrane. Functionally, part of the ABC transporter complex LolCDE involved in the translocation of mature outer membrane-directed lipoproteins, from the inner membrane to the periplasmic chaperone, LolA. Responsible for the formation of the LolA-lipoprotein complex in an ATP-dependent manner. The protein is Lipoprotein-releasing system ATP-binding protein LolD of Bartonella quintana (strain Toulouse) (Rochalimaea quintana).